The chain runs to 479 residues: ATP synthase subunit beta (479 aa).

160–167 (GGAGVGKT) lines the ATP pocket.

This sequence belongs to the ATPase alpha/beta chains family. F-type ATPases have 2 components, CF(1) - the catalytic core - and CF(0) - the membrane proton channel. CF(1) has five subunits: alpha(3), beta(3), gamma(1), delta(1), epsilon(1). CF(0) has three main subunits: a(1), b(2) and c(9-12). The alpha and beta chains form an alternating ring which encloses part of the gamma chain. CF(1) is attached to CF(0) by a central stalk formed by the gamma and epsilon chains, while a peripheral stalk is formed by the delta and b chains.

Its subcellular location is the cell inner membrane. The enzyme catalyses ATP + H2O + 4 H(+)(in) = ADP + phosphate + 5 H(+)(out). In terms of biological role, produces ATP from ADP in the presence of a proton gradient across the membrane. The catalytic sites are hosted primarily by the beta subunits. The polypeptide is ATP synthase subunit beta (Anaplasma phagocytophilum (strain HZ)).